The following is a 386-amino-acid chain: MNIHEYQAKHILSRFGVSVPKGAIVHSLSEVDDAISKLHSKVIVVKAQIHAGGRGKAGGVVVCRTSDEAKASIKNMLGSTLVTHQTSKDGQKVRKVYLEEGCDIKKEYYISAIVNRKQSQVSIIFSTEGGVDIEEVASTSPEKVIVCNIDPLFGFQSFHGRNLCFDSNLSLDQTRKISDIAEKIYKVMLSTDANQVEINPLVETSSGNFIALDAKINFDDNALYRHPDIQELRDYDEEIKEEIEASKYGLNYIKMDGNIGCMVNGAGLAMATMDIIKYYGAEPANFLDVGGGASQKTVTEAFKIILSDKVDGILVNIFGGIMRCDIIANGIIAAIEEIRINVPLVVRLSGTNFELGKKLLDDSSLNIITANDLSEAAYNIVNIVKK.

The 236-residue stretch at 9 to 244 folds into the ATP-grasp domain; that stretch reads KHILSRFGVS…YDEEIKEEIE (236 aa). ATP contacts are provided by residues lysine 46, 53 to 55, glutamate 99, cysteine 102, and glutamate 107; that span reads GRG. Mg(2+) contacts are provided by asparagine 199 and aspartate 213. Substrate is bound by residues asparagine 264 and 320 to 322; that span reads GIM.

It belongs to the succinate/malate CoA ligase beta subunit family. Heterotetramer of two alpha and two beta subunits. Mg(2+) is required as a cofactor.

It carries out the reaction succinate + ATP + CoA = succinyl-CoA + ADP + phosphate. The catalysed reaction is GTP + succinate + CoA = succinyl-CoA + GDP + phosphate. It functions in the pathway carbohydrate metabolism; tricarboxylic acid cycle; succinate from succinyl-CoA (ligase route): step 1/1. Functionally, succinyl-CoA synthetase functions in the citric acid cycle (TCA), coupling the hydrolysis of succinyl-CoA to the synthesis of either ATP or GTP and thus represents the only step of substrate-level phosphorylation in the TCA. The beta subunit provides nucleotide specificity of the enzyme and binds the substrate succinate, while the binding sites for coenzyme A and phosphate are found in the alpha subunit. The protein is Succinate--CoA ligase [ADP-forming] subunit beta of Ehrlichia canis (strain Jake).